Here is a 361-residue protein sequence, read N- to C-terminus: Innexin inx1 (361 aa).

At 1–28 the chain is on the cytoplasmic side; that stretch reads MYKLLGGLKEYLKWQDIVTDNAIFRLHN. Residues 29-49 form a helical membrane-spanning segment; it reads LFTTVLLLTCSLIITATQYVG. Over 50-109 the chain is Extracellular; it reads NPIHCIVNGLPVRPINTYCWITSTFTMPDAFLRQVGSEVAHPGVANDFGDEDAKKYYTYY. A helical membrane pass occupies residues 110-130; the sequence is QWVCFVLFFQAMLCYTPKWIW. Residues 131-181 are Cytoplasmic-facing; it reads DSIEGGLLRTLIMGLNRGLCQDDEKCMKKKALIEYLLRHIKRHNMYALKYW. A helical membrane pass occupies residues 182 to 202; the sequence is FCETLCLVNIIGQLYLMNHFF. The Extracellular segment spans residues 203-267; the sequence is DGEFFSYGLR…LPLNIVNEKT (65 aa). The chain crosses the membrane as a helical span at residues 268–288; that stretch reads YIFLWFWYIILAALLSVLVVY. Residues 289–361 are Cytoplasmic-facing; the sequence is RAVILAVPSV…KIETPSSNNP (73 aa).

The protein belongs to the pannexin family. As to expression, expressed in embryonic neural precursors including the dorsal median neuroblast, glial cells, neuropilar glial ring, developing myoblasts cells and in a circumferential band of epithelial cells at the trochanter/coxa boundary stripe in the developing limb.

It localises to the cell membrane. Its subcellular location is the cell junction. It is found in the gap junction. In terms of biological role, structural components of the gap junctions. The chain is Innexin inx1 (inx1) from Schistocerca americana (American grasshopper).